We begin with the raw amino-acid sequence, 363 residues long: Phosphoserine aminotransferase (363 aa).

Arg42 serves as a coordination point for L-glutamate. Pyridoxal 5'-phosphate is bound by residues 76–77, Trp102, Thr156, Asp175, and Gln198; that span reads GR. An N6-(pyridoxal phosphate)lysine modification is found at Lys199. 240–241 is a binding site for pyridoxal 5'-phosphate; it reads NT.

It belongs to the class-V pyridoxal-phosphate-dependent aminotransferase family. SerC subfamily. Homodimer. Pyridoxal 5'-phosphate is required as a cofactor.

The protein localises to the cytoplasm. It catalyses the reaction O-phospho-L-serine + 2-oxoglutarate = 3-phosphooxypyruvate + L-glutamate. The catalysed reaction is 4-(phosphooxy)-L-threonine + 2-oxoglutarate = (R)-3-hydroxy-2-oxo-4-phosphooxybutanoate + L-glutamate. It functions in the pathway amino-acid biosynthesis; L-serine biosynthesis; L-serine from 3-phospho-D-glycerate: step 2/3. Its pathway is cofactor biosynthesis; pyridoxine 5'-phosphate biosynthesis; pyridoxine 5'-phosphate from D-erythrose 4-phosphate: step 3/5. In terms of biological role, catalyzes the reversible conversion of 3-phosphohydroxypyruvate to phosphoserine and of 3-hydroxy-2-oxo-4-phosphonooxybutanoate to phosphohydroxythreonine. The polypeptide is Phosphoserine aminotransferase (Shewanella sp. (strain ANA-3)).